The following is a 232-amino-acid chain: Phosphatidylserine decarboxylase proenzyme (232 aa).

Ser190 functions as the Schiff-base intermediate with substrate; via pyruvic acid in the catalytic mechanism. The residue at position 190 (Ser190) is a Pyruvic acid (Ser); by autocatalysis.

The protein belongs to the phosphatidylserine decarboxylase family. PSD-A subfamily. In terms of assembly, heterodimer of a large membrane-associated beta subunit and a small pyruvoyl-containing alpha subunit. Pyruvate serves as cofactor. Is synthesized initially as an inactive proenzyme. Formation of the active enzyme involves a self-maturation process in which the active site pyruvoyl group is generated from an internal serine residue via an autocatalytic post-translational modification. Two non-identical subunits are generated from the proenzyme in this reaction, and the pyruvate is formed at the N-terminus of the alpha chain, which is derived from the carboxyl end of the proenzyme. The post-translation cleavage follows an unusual pathway, termed non-hydrolytic serinolysis, in which the side chain hydroxyl group of the serine supplies its oxygen atom to form the C-terminus of the beta chain, while the remainder of the serine residue undergoes an oxidative deamination to produce ammonia and the pyruvoyl prosthetic group on the alpha chain.

It is found in the cell membrane. The enzyme catalyses a 1,2-diacyl-sn-glycero-3-phospho-L-serine + H(+) = a 1,2-diacyl-sn-glycero-3-phosphoethanolamine + CO2. The protein operates within phospholipid metabolism; phosphatidylethanolamine biosynthesis; phosphatidylethanolamine from CDP-diacylglycerol: step 2/2. In terms of biological role, catalyzes the formation of phosphatidylethanolamine (PtdEtn) from phosphatidylserine (PtdSer). The chain is Phosphatidylserine decarboxylase proenzyme from Brucella canis (strain ATCC 23365 / NCTC 10854 / RM-666).